We begin with the raw amino-acid sequence, 279 residues long: Octanoyl-[GcvH]:protein N-octanoyltransferase (279 aa).

The BPL/LPL catalytic domain occupies 48–253; sequence ETSPPVIRLW…TLEKLSDEIV (206 aa). Catalysis depends on cysteine 152, which acts as the Acyl-thioester intermediate.

This sequence belongs to the octanoyltransferase LipL family.

It catalyses the reaction N(6)-octanoyl-L-lysyl-[glycine-cleavage complex H protein] + L-lysyl-[lipoyl-carrier protein] = N(6)-octanoyl-L-lysyl-[lipoyl-carrier protein] + L-lysyl-[glycine-cleavage complex H protein]. It functions in the pathway protein modification; protein lipoylation via endogenous pathway; protein N(6)-(lipoyl)lysine from octanoyl-[acyl-carrier-protein]. Catalyzes the amidotransfer (transamidation) of the octanoyl moiety from octanoyl-GcvH to the lipoyl domain of the E2 subunit of lipoate-dependent enzymes. This chain is Octanoyl-[GcvH]:protein N-octanoyltransferase, found in Oceanobacillus iheyensis (strain DSM 14371 / CIP 107618 / JCM 11309 / KCTC 3954 / HTE831).